We begin with the raw amino-acid sequence, 188 residues long: Crossover junction endodeoxyribonuclease RuvC (188 aa).

Catalysis depends on residues Asp7, Glu68, and Asp141. Mg(2+) is bound by residues Asp7, Glu68, and Asp141.

This sequence belongs to the RuvC family. Homodimer which binds Holliday junction (HJ) DNA. The HJ becomes 2-fold symmetrical on binding to RuvC with unstacked arms; it has a different conformation from HJ DNA in complex with RuvA. In the full resolvosome a probable DNA-RuvA(4)-RuvB(12)-RuvC(2) complex forms which resolves the HJ. It depends on Mg(2+) as a cofactor.

The protein resides in the cytoplasm. The enzyme catalyses Endonucleolytic cleavage at a junction such as a reciprocal single-stranded crossover between two homologous DNA duplexes (Holliday junction).. The RuvA-RuvB-RuvC complex processes Holliday junction (HJ) DNA during genetic recombination and DNA repair. Endonuclease that resolves HJ intermediates. Cleaves cruciform DNA by making single-stranded nicks across the HJ at symmetrical positions within the homologous arms, yielding a 5'-phosphate and a 3'-hydroxyl group; requires a central core of homology in the junction. The consensus cleavage sequence is 5'-(A/T)TT(C/G)-3'. Cleavage occurs on the 3'-side of the TT dinucleotide at the point of strand exchange. HJ branch migration catalyzed by RuvA-RuvB allows RuvC to scan DNA until it finds its consensus sequence, where it cleaves and resolves the cruciform DNA. The polypeptide is Crossover junction endodeoxyribonuclease RuvC (Mycobacterium avium (strain 104)).